A 215-amino-acid polypeptide reads, in one-letter code: Ribose-5-phosphate isomerase A (215 aa).

Substrate-binding positions include 26–29 (TGST), 79–82 (DGAD), and 92–95 (KGGG). Glutamate 101 serves as the catalytic Proton acceptor. Lysine 119 lines the substrate pocket.

This sequence belongs to the ribose 5-phosphate isomerase family. As to quaternary structure, homodimer.

It carries out the reaction aldehydo-D-ribose 5-phosphate = D-ribulose 5-phosphate. It participates in carbohydrate degradation; pentose phosphate pathway; D-ribose 5-phosphate from D-ribulose 5-phosphate (non-oxidative stage): step 1/1. In terms of biological role, catalyzes the reversible conversion of ribose-5-phosphate to ribulose 5-phosphate. In Xanthomonas oryzae pv. oryzae (strain PXO99A), this protein is Ribose-5-phosphate isomerase A.